Consider the following 370-residue polypeptide: Cytochrome b (370 aa).

Transmembrane regions (helical) follow at residues 25–45, 69–90, 105–125, and 170–190; these read FGSMLLACLTLQLLTGFFLAV, WMMQNLHAIGASMFFICIYIHI, WLSGTTLLIMLMATAFFGYVL, and FFALHFILPFGIISLSSLHIL. His75 and His89 together coordinate heme b. Residues His174 and His188 each coordinate heme b. Residue His193 coordinates a ubiquinone. 4 helical membrane-spanning segments follow: residues 218–238, 280–300, 312–332, and 339–358; these read YKDMLMLTIMTIMLLTIVSFF, LGGALALXMSIMILLTLPFTH, FMQLTFWTFTATFLVISWTAT, and FTTISQVAALMYFLFFISNP.

Belongs to the cytochrome b family. In terms of assembly, the cytochrome bc1 complex contains 3 respiratory subunits (MT-CYB, CYC1 and UQCRFS1), 2 core proteins (UQCRC1 and UQCRC2) and probably 6 low-molecular weight proteins. Heme b is required as a cofactor.

It localises to the mitochondrion inner membrane. Functionally, component of the ubiquinol-cytochrome c reductase complex (complex III or cytochrome b-c1 complex) that is part of the mitochondrial respiratory chain. The b-c1 complex mediates electron transfer from ubiquinol to cytochrome c. Contributes to the generation of a proton gradient across the mitochondrial membrane that is then used for ATP synthesis. This Chilabothrus exsul (Abaco Island boa) protein is Cytochrome b (MT-CYB).